A 436-amino-acid chain; its full sequence is 3-ketoacyl-CoA thiolase (436 aa).

The active-site Acyl-thioester intermediate is Cys99. Active-site proton acceptor residues include His392 and Cys422.

This sequence belongs to the thiolase-like superfamily. Thiolase family. In terms of assembly, heterotetramer of two alpha chains (FadJ) and two beta chains (FadI).

The protein localises to the cytoplasm. It catalyses the reaction an acyl-CoA + acetyl-CoA = a 3-oxoacyl-CoA + CoA. It functions in the pathway lipid metabolism; fatty acid beta-oxidation. Functionally, catalyzes the final step of fatty acid oxidation in which acetyl-CoA is released and the CoA ester of a fatty acid two carbons shorter is formed. This chain is 3-ketoacyl-CoA thiolase, found in Salmonella newport (strain SL254).